The primary structure comprises 100 residues: Small ribosomal subunit protein uS14c (100 aa).

The protein belongs to the universal ribosomal protein uS14 family. As to quaternary structure, part of the 30S ribosomal subunit.

Its subcellular location is the plastid. The protein resides in the chloroplast. Functionally, binds 16S rRNA, required for the assembly of 30S particles. This chain is Small ribosomal subunit protein uS14c, found in Gracilaria tenuistipitata var. liui (Red alga).